We begin with the raw amino-acid sequence, 493 residues long: Trigger factor (493 aa).

The region spanning 162-243 (GDFVSLDLSA…VRGVKEKELP (82 aa)) is the PPIase FKBP-type domain. Residues 432–493 (ELALPARPAP…AAVDSGDRDI (62 aa)) form a disordered region. Positions 449–470 (HAGHDHEGHDHADHAGHDHAGD) are enriched in basic and acidic residues. The span at 474 to 485 (AEPAEAPAATAA) shows a compositional bias: low complexity.

Belongs to the FKBP-type PPIase family. Tig subfamily.

It is found in the cytoplasm. The catalysed reaction is [protein]-peptidylproline (omega=180) = [protein]-peptidylproline (omega=0). Functionally, involved in protein export. Acts as a chaperone by maintaining the newly synthesized protein in an open conformation. Functions as a peptidyl-prolyl cis-trans isomerase. The chain is Trigger factor from Frankia alni (strain DSM 45986 / CECT 9034 / ACN14a).